The following is a 218-amino-acid chain: ETS domain-containing protein ets-7 (218 aa).

The ETS DNA-binding region spans 12 to 93 (QRLLNFLRGL…KGKDSRYCFL (82 aa)). Residues 131–161 (TSNFSLQSSPSSSSNSSSARTMSATSSPTSS) show a composition bias toward low complexity. Positions 131–162 (TSNFSLQSSPSSSSNSSSARTMSATSSPTSSL) are disordered.

This sequence belongs to the ETS family.

The protein resides in the nucleus. Functionally, probable transcription factor. Involved in responses to oxidative stress. The protein is ETS domain-containing protein ets-7 of Caenorhabditis elegans.